The following is a 436-amino-acid chain: GDP-mannose 6-dehydrogenase (436 aa).

Positions 10, 11, 30, 35, 86, and 124 each coordinate NAD(+). Residues Glu161, Lys210, Asn214, His217, Asn225, Tyr256, Tyr257, Arg259, and Gly265 each contribute to the GDP-alpha-D-mannuronate site. Cys268 is an active-site residue. Residue Lys271 coordinates NAD(+). A GDP-alpha-D-mannuronate-binding site is contributed by Lys324. Position 331 (Arg331) interacts with NAD(+).

It belongs to the UDP-glucose/GDP-mannose dehydrogenase family.

It carries out the reaction GDP-alpha-D-mannose + 2 NAD(+) + H2O = GDP-alpha-D-mannuronate + 2 NADH + 3 H(+). The protein operates within glycan biosynthesis; alginate biosynthesis. Its function is as follows. Catalyzes the oxidation of guanosine diphospho-D-mannose (GDP-D-mannose) to GDP-D-mannuronic acid, a precursor for alginate polymerization. The alginate layer causes a mucoid phenotype and is essential for cyst formation. This Azotobacter vinelandii protein is GDP-mannose 6-dehydrogenase (algD).